We begin with the raw amino-acid sequence, 126 residues long: Small ribosomal subunit protein bS6 (126 aa).

Belongs to the bacterial ribosomal protein bS6 family.

Binds together with bS18 to 16S ribosomal RNA. This chain is Small ribosomal subunit protein bS6, found in Actinobacillus succinogenes (strain ATCC 55618 / DSM 22257 / CCUG 43843 / 130Z).